A 224-amino-acid chain; its full sequence is Peptidyl-prolyl cis-trans isomerase CYP21-1 (224 aa).

Residues 1 to 27 (MRREISFLLQPRCLLLLVALTIFLVFA) form the signal peptide. Residues 50-214 (FLDVDIDGQR…KKVVIADSGE (165 aa)) enclose the PPIase cyclophilin-type domain. An N-linked (GlcNAc...) asparagine glycan is attached at asparagine 158.

This sequence belongs to the cyclophilin-type PPIase family. Ubiquitous.

Its subcellular location is the endoplasmic reticulum. It catalyses the reaction [protein]-peptidylproline (omega=180) = [protein]-peptidylproline (omega=0). Functionally, PPIases accelerate the folding of proteins. It catalyzes the cis-trans isomerization of proline imidic peptide bonds in oligopeptides. The protein is Peptidyl-prolyl cis-trans isomerase CYP21-1 (CYP21-1) of Arabidopsis thaliana (Mouse-ear cress).